Consider the following 213-residue polypeptide: FMN-dependent NADH:quinone oxidoreductase 1 (213 aa).

18-20 (SVS) contacts FMN.

This sequence belongs to the azoreductase type 1 family. As to quaternary structure, homodimer. FMN serves as cofactor.

The catalysed reaction is 2 a quinone + NADH + H(+) = 2 a 1,4-benzosemiquinone + NAD(+). The enzyme catalyses N,N-dimethyl-1,4-phenylenediamine + anthranilate + 2 NAD(+) = 2-(4-dimethylaminophenyl)diazenylbenzoate + 2 NADH + 2 H(+). Quinone reductase that provides resistance to thiol-specific stress caused by electrophilic quinones. Functionally, also exhibits azoreductase activity. Catalyzes the reductive cleavage of the azo bond in aromatic azo compounds to the corresponding amines. The polypeptide is FMN-dependent NADH:quinone oxidoreductase 1 (Bacillus cereus (strain ZK / E33L)).